The primary structure comprises 527 residues: Acid-sensing ion channel 1 (527 aa).

Topologically, residues 1–49 are cytoplasmic; sequence MMDLKVDEEEVDSGQPVSIQAFASSSTLHGISHIFSYERLSLKRVVWAL. Residues 50 to 71 form a helical membrane-spanning segment; the sequence is CFMGSLALLALVCTNRIQYYFL. The Extracellular portion of the chain corresponds to 72 to 424; that stretch reads YPHVTKLDEV…NYETIEQKKA (353 aa). 7 disulfides stabilise this stretch: Cys94-Cys195, Cys173-Cys180, Cys291-Cys366, Cys309-Cys362, Cys313-Cys360, Cys322-Cys344, and Cys324-Cys336. N-linked (GlcNAc...) asparagine glycosylation is found at Asn367 and Asn394. The chain crosses the membrane as a discontinuously helical span at residues 425-454; sequence YEVAGLLGDIGGQMGLFIGASILTVLELFD. Residues 443 to 445 carry the GAS motif; ion selectivity filter motif; the sequence is GAS. The Cytoplasmic portion of the chain corresponds to 455–527; that stretch reads YAYEVIKHRL…ARGTFEDFTC (73 aa).

It belongs to the amiloride-sensitive sodium channel (TC 1.A.6) family. ASIC1 subfamily. Homotrimer. Heterotrimer; with other ASIC proteins producing channel with different properties.

It is found in the cell membrane. The protein localises to the postsynaptic cell membrane. The protein resides in the cell projection. It localises to the dendrite. The enzyme catalyses Na(+)(in) = Na(+)(out). The catalysed reaction is Li(+)(in) = Li(+)(out). It catalyses the reaction K(+)(in) = K(+)(out). It carries out the reaction Ca(2+)(in) = Ca(2+)(out). Its activity is regulated as follows. Inhibited by the diuretic drug amiloride. Inhibited by Cs(1+) ions. Inhibited by the spider venom psalmotoxin-1; this locks the channel into its desensitized conformation. Channel activity is increased by the heterodimeric snake venom neurotoxin composed of MitTx-alpha and MitTx-beta; this slows channel closure and increases the magnitude of the steady-state current that is triggered by low pH. Forms voltage-independent, pH-gated trimeric sodium channels that act as postsynaptic excitatory receptors in the nervous system, playing a crucial role in regulating synaptic plasticity, learning, and memory. Upon extracellular pH drop this channel elicits transient, fast activating, and completely desensitizing inward currents. Displays high selectivity for sodium ions but can also permit the permeation of other cations. Regulates more or less directly intracellular calcium concentration and CaMKII phosphorylation, and thereby the density of dendritic spines. Modulates neuronal activity in the circuits underlying innate fear. The sequence is that of Acid-sensing ion channel 1 from Gallus gallus (Chicken).